The primary structure comprises 692 residues: Glycine--tRNA ligase beta subunit (692 aa).

It belongs to the class-II aminoacyl-tRNA synthetase family. Tetramer of two alpha and two beta subunits.

It is found in the cytoplasm. The enzyme catalyses tRNA(Gly) + glycine + ATP = glycyl-tRNA(Gly) + AMP + diphosphate. In Oceanobacillus iheyensis (strain DSM 14371 / CIP 107618 / JCM 11309 / KCTC 3954 / HTE831), this protein is Glycine--tRNA ligase beta subunit.